The chain runs to 98 residues: Small ribosomal subunit protein uS19 (98 aa).

A disordered region spans residues Thr-77–Lys-98.

The protein belongs to the universal ribosomal protein uS19 family.

Functionally, protein S19 forms a complex with S13 that binds strongly to the 16S ribosomal RNA. The protein is Small ribosomal subunit protein uS19 of Chlorobium luteolum (strain DSM 273 / BCRC 81028 / 2530) (Pelodictyon luteolum).